Reading from the N-terminus, the 556-residue chain is Outer spore wall assembly protein SHE10 (556 aa).

Positions 1-21 (MRFLTKFLLFLATVYFGLKYA) are cleaved as a signal peptide. Positions 135-201 (NKNLKRHVER…KQITSDVKKT (67 aa)) form a coiled coil. Basic and acidic residues predominate over residues 190 to 208 (EAKQITSDVKKTVESEIKK). 2 disordered regions span residues 190–263 (EAKQ…EDIT) and 534–556 (RKEA…PISA). A compositionally biased stretch (low complexity) spans 220–244 (IVSTSTIVKTITRTRHSSSSTTSTK). Basic and acidic residues predominate over residues 245 to 256 (SAEETSEKNLET). Residues 481-547 (KISEFKLLLD…GEVNESSEEE (67 aa)) are a coiled coil.

Belongs to the SHE10 family. As to quaternary structure, component of the mitochondria-localized RNase mitochondrial RNA-processing (RNase MRP) composed of one single RNA encoded by the NME1 gene and at least 31 proteins. Absent in the nucleus-localized RNase MRP (NuMRP).

It localises to the mitochondrion. Involved in spore wall assembly. May be a component of the mitochondrial RNase MRP (MtMRP), a ribonucleoprotein endoribonuclease involved in the cleaving RNA transcripts to generate primers for DNA replication in mitochondria. The polypeptide is Outer spore wall assembly protein SHE10 (Candida glabrata (strain ATCC 2001 / BCRC 20586 / JCM 3761 / NBRC 0622 / NRRL Y-65 / CBS 138) (Yeast)).